The chain runs to 157 residues: MKNEDSTQIFEVFVDADSCPVKDEIELVAESYKVKVTFVSSYAHNMTVGPTSKVVMVDAEREAVDLYIANHIKKKDVCVTHDYGLASLLLTKGATVISPRGQMFDHTIIDSLLAQRHQSQKDRRAGKKTKGPRAYLKGDRERFIQQFEKILSNRAGI.

The protein belongs to the UPF0178 family.

This Halalkalibacterium halodurans (strain ATCC BAA-125 / DSM 18197 / FERM 7344 / JCM 9153 / C-125) (Bacillus halodurans) protein is UPF0178 protein BH1374.